Reading from the N-terminus, the 497-residue chain is Glutamate--tRNA ligase (497 aa).

The 'HIGH' region signature appears at 13–23; the sequence is PSPTGTPHVGM. The short motif at 257–261 is the 'KMSKS' region element; sequence KLSKR. K260 provides a ligand contact to ATP.

The protein belongs to the class-I aminoacyl-tRNA synthetase family. Glutamate--tRNA ligase type 1 subfamily. As to quaternary structure, monomer.

The protein resides in the cytoplasm. The catalysed reaction is tRNA(Glu) + L-glutamate + ATP = L-glutamyl-tRNA(Glu) + AMP + diphosphate. Its function is as follows. Catalyzes the attachment of glutamate to tRNA(Glu) in a two-step reaction: glutamate is first activated by ATP to form Glu-AMP and then transferred to the acceptor end of tRNA(Glu). This chain is Glutamate--tRNA ligase, found in Corynebacterium diphtheriae (strain ATCC 700971 / NCTC 13129 / Biotype gravis).